The primary structure comprises 159 residues: 2-C-methyl-D-erythritol 2,4-cyclodiphosphate synthase (159 aa).

Asp8 and His10 together coordinate a divalent metal cation. Residues 8 to 10 and 34 to 35 each bind 4-CDP-2-C-methyl-D-erythritol 2-phosphate; these read DVH and HS. A divalent metal cation is bound at residue His42. Residues 56 to 58, 61 to 65, 100 to 106, 132 to 135, Phe139, and Arg142 contribute to the 4-CDP-2-C-methyl-D-erythritol 2-phosphate site; these read DIG, FPDTD, AQEPKMA, and TTTE.

This sequence belongs to the IspF family. Homotrimer. Requires a divalent metal cation as cofactor.

It carries out the reaction 4-CDP-2-C-methyl-D-erythritol 2-phosphate = 2-C-methyl-D-erythritol 2,4-cyclic diphosphate + CMP. The protein operates within isoprenoid biosynthesis; isopentenyl diphosphate biosynthesis via DXP pathway; isopentenyl diphosphate from 1-deoxy-D-xylulose 5-phosphate: step 4/6. Involved in the biosynthesis of isopentenyl diphosphate (IPP) and dimethylallyl diphosphate (DMAPP), two major building blocks of isoprenoid compounds. Catalyzes the conversion of 4-diphosphocytidyl-2-C-methyl-D-erythritol 2-phosphate (CDP-ME2P) to 2-C-methyl-D-erythritol 2,4-cyclodiphosphate (ME-CPP) with a corresponding release of cytidine 5-monophosphate (CMP). The chain is 2-C-methyl-D-erythritol 2,4-cyclodiphosphate synthase from Alkaliphilus metalliredigens (strain QYMF).